Here is a 265-residue protein sequence, read N- to C-terminus: Mlc titration factor A (265 aa).

4 residues coordinate Zn(2+): His-111, His-148, His-152, and Glu-211.

It belongs to the MtfA family. As to quaternary structure, interacts with Mlc. It depends on Zn(2+) as a cofactor.

The protein resides in the cytoplasm. In terms of biological role, involved in the modulation of the activity of the glucose-phosphotransferase system (glucose-PTS). Interacts with the transcriptional repressor Mlc, preventing its interaction with DNA and leading to the modulation of expression of genes regulated by Mlc, including ptsG, which encodes the PTS system glucose-specific EIICB component. Its function is as follows. Shows zinc-dependent metallopeptidase activity. This is Mlc titration factor A from Salmonella paratyphi A (strain AKU_12601).